Reading from the N-terminus, the 24-residue chain is U1-plectoxin-Pt1e (24 aa).

Cys-4 and Cys-18 are joined by a disulfide.

The protein belongs to the neurotoxin 02 (plectoxin) family. 02 (plectoxin) subfamily. Contains 5 disulfide bonds. In terms of tissue distribution, expressed by the venom gland.

It localises to the secreted. Potent toxin that may paralyze and/or kill insect pests such as H.virescens (lepidoptera), S.exigua (beet armyworm) and M.sexta (tobacco hornworm). This Plectreurys tristis (Spider) protein is U1-plectoxin-Pt1e.